Consider the following 286-residue polypeptide: 4-hydroxybenzoate octaprenyltransferase (286 aa).

Helical transmembrane passes span 22–42 (IGTLLLLWPTLWALWLASAGV), 45–65 (FSLLLIFTAGVFVMRSAGCVI), 90–110 (LTAVRALLFFLLLVLIAFVLV), 113–133 (LNQFTIYLSVGGLLLAAIYPF), 142–162 (QVVLGMAFSWAIPMAYGAVVG), 169–189 (WLLFLANLVWTIAYDTMYAMV), 212–232 (LYIALLQLGTLTLLAIIGWLE), 236–256 (VSYYFSLLLAAGLFIYQQWLI), and 265–285 (FRAFLNNNWVGMLIFAGIMLA).

Belongs to the UbiA prenyltransferase family. It depends on Mg(2+) as a cofactor.

The protein resides in the cell inner membrane. The catalysed reaction is all-trans-octaprenyl diphosphate + 4-hydroxybenzoate = 4-hydroxy-3-(all-trans-octaprenyl)benzoate + diphosphate. Its pathway is cofactor biosynthesis; ubiquinone biosynthesis. Its function is as follows. Catalyzes the prenylation of para-hydroxybenzoate (PHB) with an all-trans polyprenyl group. Mediates the second step in the final reaction sequence of ubiquinone-8 (UQ-8) biosynthesis, which is the condensation of the polyisoprenoid side chain with PHB, generating the first membrane-bound Q intermediate 3-octaprenyl-4-hydroxybenzoate. The protein is 4-hydroxybenzoate octaprenyltransferase of Tolumonas auensis (strain DSM 9187 / NBRC 110442 / TA 4).